A 297-amino-acid chain; its full sequence is MPFVQFPNLFEISKFARQGKTVSELKCEVWTDLLSYLRTGLPTGLLSDFAEHHELNQLQAFTAVQFDEPCFVLPARAAIIVYCPEQDDMLSGVFEVDATGKRTFVRTSNTDIIGSAKSDVSGGKQIQSVGVAQGLETVMQMMDYILIQFHVQFGSFTDIGHFGMMRDAIQLYGTCACPFLLSLARFSTALSYLNAKLPSIVGLHYSGEPTTLGGIITRGVNLSAREAYFSKKYDPAQSLVASAFFTVKTSASGATVIEKMSSDIGLVYHMNRAAAVKVVSSRIGRLGEVANFGDDAE.

The chain is Non-structural protein VP10 from Oryza latifolia (Indian wild rice).